The sequence spans 576 residues: RING finger and SPRY domain-containing protein 1 (576 aa).

A signal peptide spans 1 to 16; sequence MIVFGWAVFLASRSLG. Ser50 is modified (phosphoserine). The interval 50–99 is disordered; that stretch reads SGTDDSVDTQQQQAENSAVPTADTRSQPRDPVRPPRRGRGPHEPRRKKQN. Polar residues predominate over residues 57–68; that stretch reads DTQQQQAENSAV. A compositionally biased stretch (basic residues) spans 83–97; the sequence is PPRRGRGPHEPRRKK. The region spanning 300 to 483 is the B30.2/SPRY domain; sequence LFLKEGRQLT…CEFNFGAKPF (184 aa). Asn314 carries N-linked (GlcNAc...) asparagine glycosylation. The RING-type zinc-finger motif lies at 527–562; sequence CSLCCDEVADTQLKPCGHSDLCMDCALQLETCPLCR.

Its subcellular location is the secreted. This Pongo abelii (Sumatran orangutan) protein is RING finger and SPRY domain-containing protein 1 (RSPRY1).